The sequence spans 158 residues: Lipoprotein signal peptidase (158 aa).

Transmembrane regions (helical) follow at residues 7–27 (LFWIAAFIAFFLDQITKYWVV), 38–58 (LLTGIFHFTYVTNTGAAFSLL), 68–88 (LSLGVSLVLIALALFGPTLNL), and 92–112 (LGYGLILGGAMGNGIDRFVLG). Residues aspartate 116 and aspartate 132 contribute to the active site. The chain crosses the membrane as a helical span at residues 125 to 145 (FPVFNVADSFISIGIVFLLIA).

It belongs to the peptidase A8 family.

It localises to the cell inner membrane. It catalyses the reaction Release of signal peptides from bacterial membrane prolipoproteins. Hydrolyzes -Xaa-Yaa-Zaa-|-(S,diacylglyceryl)Cys-, in which Xaa is hydrophobic (preferably Leu), and Yaa (Ala or Ser) and Zaa (Gly or Ala) have small, neutral side chains.. The protein operates within protein modification; lipoprotein biosynthesis (signal peptide cleavage). In terms of biological role, this protein specifically catalyzes the removal of signal peptides from prolipoproteins. The chain is Lipoprotein signal peptidase from Nostoc punctiforme (strain ATCC 29133 / PCC 73102).